The primary structure comprises 286 residues: ATP phosphoribosyltransferase (286 aa).

It belongs to the ATP phosphoribosyltransferase family. Long subfamily. It depends on Mg(2+) as a cofactor.

It is found in the cytoplasm. The enzyme catalyses 1-(5-phospho-beta-D-ribosyl)-ATP + diphosphate = 5-phospho-alpha-D-ribose 1-diphosphate + ATP. It functions in the pathway amino-acid biosynthesis; L-histidine biosynthesis; L-histidine from 5-phospho-alpha-D-ribose 1-diphosphate: step 1/9. With respect to regulation, feedback inhibited by histidine. Its function is as follows. Catalyzes the condensation of ATP and 5-phosphoribose 1-diphosphate to form N'-(5'-phosphoribosyl)-ATP (PR-ATP). Has a crucial role in the pathway because the rate of histidine biosynthesis seems to be controlled primarily by regulation of HisG enzymatic activity. This is ATP phosphoribosyltransferase from Paenarthrobacter aurescens (strain TC1).